A 440-amino-acid chain; its full sequence is Cyclic dipeptide prenyltransferase (440 aa).

The interval 1–33 (MDGEMTASPPDISACDTSAVDEQTGQSGQSQAP) is disordered. A compositionally biased stretch (polar residues) spans 20-32 (VDEQTGQSGQSQA). T108 and E116 together coordinate substrate. Positions 129, 219, and 221 each coordinate dimethylallyl diphosphate. F223 is a substrate binding site. Dimethylallyl diphosphate contacts are provided by K286, Y288, Y366, Y431, and Y435.

This sequence belongs to the tryptophan dimethylallyltransferase family.

It carries out the reaction harmol + dimethylallyl diphosphate = 6-(3-dimethylallyl)harmol + diphosphate. The catalysed reaction is an N-terminal L-tryptophanyl-L-alpha-aminoacyl-[peptide] + H2O = an N-terminal L-alpha-aminoacyl-[peptide] + L-tryptophan. The enzyme catalyses (R)-benzodiazepinedione + dimethylallyl diphosphate = (2S,3R,11R)-aszonalenin + diphosphate. It catalyses the reaction (S)-benzodiazepinedione + dimethylallyl diphosphate = (2S,3R,11S)-aszonalenin + diphosphate. Its function is as follows. Prenyltransferase that catalyzes reverse prenylation at position N-1 of tryptophan-containing cyclic dipeptides. Accepts only dimethylallyl diphosphate (DMAPP) as the prenyl donor but shows broad substrate specificities toward its aromatic substrates. Also shows tryptophan aminopeptidase activity with preference for linear peptides containing a tryptophanyl moiety at the N-terminus. This chain is Cyclic dipeptide prenyltransferase, found in Aspergillus fumigatus (Neosartorya fumigata).